Here is a 414-residue protein sequence, read N- to C-terminus: Myb1 protein (414 aa).

3 consecutive Myb-like domains span residues 242 to 266 (WNEV…LYYG), 268 to 320 (FEDD…IKIN), and 328 to 381 (KVKL…TNLN).

It is found in the nucleus. Transcriptional activator. Has a role in the parasite erythrocytic cycle where it directly regulates key genes involved in cell cycle regulation and progression. Binds directly to Myb regulatory elements. This is Myb1 protein from Plasmodium falciparum (isolate 3D7).